Consider the following 506-residue polypeptide: ATP synthase subunit alpha (506 aa).

Gly-170–Thr-177 serves as a coordination point for ATP.

This sequence belongs to the ATPase alpha/beta chains family. F-type ATPases have 2 components, CF(1) - the catalytic core - and CF(0) - the membrane proton channel. CF(1) has five subunits: alpha(3), beta(3), gamma(1), delta(1), epsilon(1). CF(0) has four main subunits: a(1), b(1), b'(1) and c(9-12).

The protein localises to the cellular thylakoid membrane. The enzyme catalyses ATP + H2O + 4 H(+)(in) = ADP + phosphate + 5 H(+)(out). Functionally, produces ATP from ADP in the presence of a proton gradient across the membrane. The alpha chain is a regulatory subunit. This chain is ATP synthase subunit alpha, found in Synechococcus sp. (strain CC9311).